The following is a 202-amino-acid chain: Superoxide dismutase [Mn] (202 aa).

H27 serves as a coordination point for Mn(2+). Phosphothreonine is present on residues T34 and T70. Residues H82, D164, and H168 each contribute to the Mn(2+) site.

Belongs to the iron/manganese superoxide dismutase family. As to quaternary structure, homodimer; under aerobic conditions. Under anaerobic conditions it is a component of the so-called 'green protein' complex (GPC), which consists of at least two components, SodA and a nucleoside diphosphate kinase (NDK). It depends on Mn(2+) as a cofactor.

The protein localises to the cytoplasm. The catalysed reaction is 2 superoxide + 2 H(+) = H2O2 + O2. Functionally, destroys superoxide anion radicals which are normally produced within the cells and which are toxic to biological systems. Active only in homodimeric state. In Virgibacillus halodenitrificans (Bacillus halodenitrificans), this protein is Superoxide dismutase [Mn] (sodA).